The chain runs to 251 residues: Hydroxyacylglutathione hydrolase (251 aa).

Positions 53, 55, 57, 58, 110, 127, and 165 each coordinate Zn(2+).

It belongs to the metallo-beta-lactamase superfamily. Glyoxalase II family. In terms of assembly, monomer. Zn(2+) serves as cofactor.

The catalysed reaction is an S-(2-hydroxyacyl)glutathione + H2O = a 2-hydroxy carboxylate + glutathione + H(+). The protein operates within secondary metabolite metabolism; methylglyoxal degradation; (R)-lactate from methylglyoxal: step 2/2. Functionally, thiolesterase that catalyzes the hydrolysis of S-D-lactoyl-glutathione to form glutathione and D-lactic acid. This Edwardsiella ictaluri (strain 93-146) protein is Hydroxyacylglutathione hydrolase.